The primary structure comprises 486 residues: tRNA sulfurtransferase (486 aa).

The 105-residue stretch at 63-167 (DAFAERLGCI…HEKLYMVVRR (105 aa)) folds into the THUMP domain. ATP contacts are provided by residues 185–186 (LI), Lys-267, Gly-289, and Gln-298. A disulfide bond links Cys-346 and Cys-460. The Rhodanese domain maps to 408 to 486 (VDTQEVVIDI…GYTNVKVYRP (79 aa)). Cys-460 serves as the catalytic Cysteine persulfide intermediate.

It belongs to the ThiI family.

It is found in the cytoplasm. The catalysed reaction is [ThiI sulfur-carrier protein]-S-sulfanyl-L-cysteine + a uridine in tRNA + 2 reduced [2Fe-2S]-[ferredoxin] + ATP + H(+) = [ThiI sulfur-carrier protein]-L-cysteine + a 4-thiouridine in tRNA + 2 oxidized [2Fe-2S]-[ferredoxin] + AMP + diphosphate. The enzyme catalyses [ThiS sulfur-carrier protein]-C-terminal Gly-Gly-AMP + S-sulfanyl-L-cysteinyl-[cysteine desulfurase] + AH2 = [ThiS sulfur-carrier protein]-C-terminal-Gly-aminoethanethioate + L-cysteinyl-[cysteine desulfurase] + A + AMP + 2 H(+). It participates in cofactor biosynthesis; thiamine diphosphate biosynthesis. Its function is as follows. Catalyzes the ATP-dependent transfer of a sulfur to tRNA to produce 4-thiouridine in position 8 of tRNAs, which functions as a near-UV photosensor. Also catalyzes the transfer of sulfur to the sulfur carrier protein ThiS, forming ThiS-thiocarboxylate. This is a step in the synthesis of thiazole, in the thiamine biosynthesis pathway. The sulfur is donated as persulfide by IscS. The polypeptide is tRNA sulfurtransferase (Shewanella denitrificans (strain OS217 / ATCC BAA-1090 / DSM 15013)).